Consider the following 622-residue polypeptide: Low affinity potassium transport system protein Kup (622 aa).

12 helical membrane-spanning segments follow: residues 9-29, 46-66, 101-121, 137-157, 165-185, 213-233, 247-267, 276-296, 337-357, 363-383, 395-415, and 416-436; these read LSAVTLAAIGVVYGDIGTSPL, PDVVFGFLSLIFWMLILVVSV, ILVVLGLIGGSFFYGEVVITP, PALDPYIVPCSIAVLTLLFVI, VGKLFAPVMLVWFLTLALLGL, VSFFALGAVVLAITGVEALYA, WFTVVLPSLVLNYFGQGALLL, PFFLLAPDWALIPLLILATLA, IYIPVINWTLYLAVVLVIIGF, LAAAYGIAVTGTMVITSILFC, FLVVFLLMVLLIIDIPMFSAN, and VLKLFSGGWLPLSLGLVMFII.

This sequence belongs to the HAK/KUP transporter (TC 2.A.72) family.

Its subcellular location is the cell inner membrane. The catalysed reaction is K(+)(in) + H(+)(in) = K(+)(out) + H(+)(out). Functionally, responsible for the low-affinity transport of potassium into the cell. Likely operates as a K(+):H(+) symporter. This Yersinia pestis (strain Pestoides F) protein is Low affinity potassium transport system protein Kup.